Here is a 232-residue protein sequence, read N- to C-terminus: Phosphate-specific transport system accessory protein PhoU homolog 1 (232 aa).

Belongs to the PhoU family. As to quaternary structure, homodimer.

It is found in the cytoplasm. Plays a role in the regulation of phosphate uptake. The protein is Phosphate-specific transport system accessory protein PhoU homolog 1 (phoU1) of Thermotoga maritima (strain ATCC 43589 / DSM 3109 / JCM 10099 / NBRC 100826 / MSB8).